Here is a 1030-residue protein sequence, read N- to C-terminus: Exportin-T (1030 aa).

It belongs to the exportin family.

Its subcellular location is the nucleus. It localises to the cytoplasm. Functionally, tRNA nucleus export receptor which facilitates tRNA translocation across the nuclear pore complex. Involved in pre-tRNA splicing, probably by affecting the interaction of pre-tRNA with splicing endonuclease. The protein is Exportin-T (los1) of Aspergillus niger (strain ATCC MYA-4892 / CBS 513.88 / FGSC A1513).